We begin with the raw amino-acid sequence, 200 residues long: Large ribosomal subunit protein bL25 (200 aa).

The protein belongs to the bacterial ribosomal protein bL25 family. CTC subfamily. Part of the 50S ribosomal subunit; part of the 5S rRNA/L5/L18/L25 subcomplex. Contacts the 5S rRNA. Binds to the 5S rRNA independently of L5 and L18.

Its function is as follows. This is one of the proteins that binds to the 5S RNA in the ribosome where it forms part of the central protuberance. The protein is Large ribosomal subunit protein bL25 of Leifsonia xyli subsp. xyli (strain CTCB07).